The sequence spans 280 residues: Diaminopimelate epimerase (280 aa).

2 residues coordinate substrate: Asn14 and Asn67. The active-site Proton donor is Cys76. Substrate contacts are provided by residues 77–78, Asn193, and 210–211; these read GN and ER. Cys220 (proton acceptor) is an active-site residue. 221-222 contributes to the substrate binding site; it reads GT.

This sequence belongs to the diaminopimelate epimerase family. As to quaternary structure, homodimer.

The protein resides in the cytoplasm. It carries out the reaction (2S,6S)-2,6-diaminopimelate = meso-2,6-diaminopimelate. It functions in the pathway amino-acid biosynthesis; L-lysine biosynthesis via DAP pathway; DL-2,6-diaminopimelate from LL-2,6-diaminopimelate: step 1/1. Functionally, catalyzes the stereoinversion of LL-2,6-diaminopimelate (L,L-DAP) to meso-diaminopimelate (meso-DAP), a precursor of L-lysine. This is Diaminopimelate epimerase from Methanocella arvoryzae (strain DSM 22066 / NBRC 105507 / MRE50).